The chain runs to 59 residues: Potassium channel toxin alpha-KTx 16.2 (59 aa).

The first 22 residues, 1–22 (MKIFSILLVALIICSISICTEA), serve as a signal peptide directing secretion. Disulfide bonds link cysteine 30–cysteine 51, cysteine 36–cysteine 56, and cysteine 40–cysteine 58.

The protein belongs to the short scorpion toxin superfamily. Potassium channel inhibitor family. Alpha-KTx 16 subfamily. As to expression, expressed by the venom gland.

The protein resides in the secreted. Its function is as follows. Alpha-KTx 16.2: inhibits large conductance calcium-activated potassium channels (KCa1.1/Slo-beta4 KCNMA1/KCNMB4). It appears to block channel activity by a simple bimolecular inhibition process. Shows a fast association rate and a slow dissociation rate of binding on rat brain synaptosome. Significantly inhibits voltage-dependent sodium current and voltage-dependent delayed rectifier potassium currents. Functionally, significantly inhibits voltage-dependent sodium current (Nav) and voltage-dependent delayed rectifier potassium current. This is Potassium channel toxin alpha-KTx 16.2 from Olivierus martensii (Manchurian scorpion).